We begin with the raw amino-acid sequence, 227 residues long: MCFPNIHKQGYPFIAIAFVLTCIGFAFSFGLGLVFQIITVLCACFFRNPDRIVPVDDKLIISPADGLVTSVAEVESPIEAGKMVTRVSVFLSILNVHVNRAPVSGSVKLVEHRPGRFSPACTDGSTSENERVRSVIESTFGNHNIVIEQVAGVLARRIVCDLKVGDNVKLGSRMGIIRFGSRVNVYVPAGVPVLVTEGHTLVGGETVIADLDSERTAGYPRATFEKV.

The active-site Schiff-base intermediate with substrate; via pyruvic acid is the Ser-181. Pyruvic acid (Ser); by autocatalysis is present on Ser-181.

This sequence belongs to the phosphatidylserine decarboxylase family. PSD-A subfamily. As to quaternary structure, heterodimer of a large membrane-associated beta subunit and a small pyruvoyl-containing alpha subunit. It depends on pyruvate as a cofactor. Post-translationally, is synthesized initially as an inactive proenzyme. Formation of the active enzyme involves a self-maturation process in which the active site pyruvoyl group is generated from an internal serine residue via an autocatalytic post-translational modification. Two non-identical subunits are generated from the proenzyme in this reaction, and the pyruvate is formed at the N-terminus of the alpha chain, which is derived from the carboxyl end of the proenzyme. The post-translation cleavage follows an unusual pathway, termed non-hydrolytic serinolysis, in which the side chain hydroxyl group of the serine supplies its oxygen atom to form the C-terminus of the beta chain, while the remainder of the serine residue undergoes an oxidative deamination to produce ammonia and the pyruvoyl prosthetic group on the alpha chain.

Its subcellular location is the cell membrane. The enzyme catalyses a 1,2-diacyl-sn-glycero-3-phospho-L-serine + H(+) = a 1,2-diacyl-sn-glycero-3-phosphoethanolamine + CO2. It participates in phospholipid metabolism; phosphatidylethanolamine biosynthesis; phosphatidylethanolamine from CDP-diacylglycerol: step 2/2. Its function is as follows. Catalyzes the formation of phosphatidylethanolamine (PtdEtn) from phosphatidylserine (PtdSer). This is Phosphatidylserine decarboxylase proenzyme from Anaplasma phagocytophilum (strain HZ).